The chain runs to 224 residues: Phosphoglycolate phosphatase (224 aa).

Aspartate 8 serves as the catalytic Nucleophile. The Mg(2+) site is built by aspartate 8, aspartate 10, glycine 11, and glycine 43. Lysine 151 provides a ligand contact to substrate. Residues aspartate 174, serine 175, and aspartate 178 each contribute to the Mg(2+) site.

The protein belongs to the HAD-like hydrolase superfamily. Archaeal SPP-like hydrolase family. Homodimer. The cofactor is Mg(2+).

It catalyses the reaction 2-phosphoglycolate + H2O = glycolate + phosphate. Its activity is regulated as follows. Inhibited by Ca(2+) ions and by high chloride ion concentration. By contrast, low chloride concentration (up to 50 mM) slightly activate the enzyme. Functionally, catalyzes the dephosphorylation of 2-phosphoglycolate. Also has significant, but less efficient, pyrophosphatase activity, since it is able to catalyze the release of phosphate from inorganic pyrophosphate (PPi). In Thermoplasma acidophilum (strain ATCC 25905 / DSM 1728 / JCM 9062 / NBRC 15155 / AMRC-C165), this protein is Phosphoglycolate phosphatase.